Here is a 78-residue protein sequence, read N- to C-terminus: uncharacterized protein (78 aa).

Residues 56–66 (ERANAGKRVSE) are compositionally biased toward basic and acidic residues. Residues 56–78 (ERANAGKRVSEEEQINGKRKRKD) are disordered.

This is an uncharacterized protein from Saccharomyces cerevisiae (strain ATCC 204508 / S288c) (Baker's yeast).